Here is a 184-residue protein sequence, read N- to C-terminus: Interferon alpha-2 (184 aa).

The signal sequence occupies residues 1–23 (MALPFSLLMALVVLSCHSSCSLG). Cystine bridges form between cysteine 24–cysteine 122 and cysteine 52–cysteine 162.

The protein belongs to the alpha/beta interferon family. In terms of assembly, interacts with IFNAR2.

Its subcellular location is the secreted. Its function is as follows. Produced by macrophages, IFN-alpha have antiviral activities. The chain is Interferon alpha-2 from Equus caballus (Horse).